Consider the following 425-residue polypeptide: CinA-like protein (425 aa).

Belongs to the CinA family.

In Trichodesmium erythraeum (strain IMS101), this protein is CinA-like protein.